Here is a 115-residue protein sequence, read N- to C-terminus: Large ribosomal subunit protein uL18 (115 aa).

The tract at residues 1-20 (MKYTKQEARKRRHYRVRSKV) is disordered. Positions 8–18 (ARKRRHYRVRS) are enriched in basic residues.

Belongs to the universal ribosomal protein uL18 family. As to quaternary structure, part of the 50S ribosomal subunit; part of the 5S rRNA/L5/L18/L25 subcomplex. Contacts the 5S and 23S rRNAs.

Its function is as follows. This is one of the proteins that bind and probably mediate the attachment of the 5S RNA into the large ribosomal subunit, where it forms part of the central protuberance. The sequence is that of Large ribosomal subunit protein uL18 from Mesoplasma florum (strain ATCC 33453 / NBRC 100688 / NCTC 11704 / L1) (Acholeplasma florum).